Consider the following 61-residue polypeptide: Metallothionein-1F (61 aa).

At methionine 1 the chain carries N-acetylmethionine. The tract at residues 1-29 is beta; it reads MDPNCSCPTGGSCTCAGSCTCKACRCTSC. 18 residues coordinate a divalent metal cation: cysteine 5, cysteine 7, cysteine 13, cysteine 15, cysteine 19, cysteine 21, cysteine 24, cysteine 26, cysteine 29, cysteine 33, cysteine 34, cysteine 36, cysteine 37, cysteine 41, cysteine 44, cysteine 48, cysteine 50, and cysteine 57. Residues 30–61 form an alpha region; the sequence is KKSCCSCCPAGCAKCAQGCICKGASDKCSCCA. Serine 58 bears the Phosphoserine mark. The a divalent metal cation site is built by cysteine 59 and cysteine 60.

Belongs to the metallothionein superfamily. Type 1 family. Monomer.

Metallothioneins have a high content of cysteine residues that bind various heavy metals; these proteins are transcriptionally regulated by both heavy metals and glucocorticoids. This Sus scrofa (Pig) protein is Metallothionein-1F (MT1F).